A 410-amino-acid polypeptide reads, in one-letter code: Angiopoietin-related protein 4 (410 aa).

The signal sequence occupies residues 1 to 23 (MRCAPTAGAALMLCAATAGLLSA). Positions 81–106 (KDPEGSAAPPRAQANLVNPGGGDASP) are disordered. The stretch at 107-155 (ETLRSLKTQLEAQNSRIQQLFQKVAQQQRHLEKQQLRIQNLQSQMDHLA) forms a coiled coil. Residue Asn184 is glycosylated (N-linked (GlcNAc...) asparagine). One can recognise a Fibrinogen C-terminal domain in the interval 186-408 (SRLHRLPRDC…ATTILVQPTA (223 aa)). 2 cysteine pairs are disulfide-bonded: Cys195-Cys223 and Cys348-Cys361.

Homooligomer; disulfide-linked via Cys residues in the N-terminal part of the protein. The homooligomer undergoes proteolytic processing to release the ANGPTL4 C-terminal chain, which circulates as a monomer. The homooligomer unprocessed form is able to interact with the extracellular matrix. In terms of processing, N-glycosylated. Post-translationally, forms disulfide-linked dimers and tetramers. Cleaved into a smaller N-terminal chain and a larger chain that contains the fibrinogen C-terminal domain; both cleaved and uncleaved forms are detected in the extracellular space. The cleaved form is not present within the cell.

The protein resides in the secreted. The protein localises to the extracellular space. Its subcellular location is the extracellular matrix. Functionally, mediates inactivation of the lipoprotein lipase LPL, and thereby plays a role in the regulation of triglyceride clearance from the blood serum and in lipid metabolism. May also play a role in regulating glucose homeostasis and insulin sensitivity. Inhibits proliferation, migration, and tubule formation of endothelial cells and reduces vascular leakage. Upon heterologous expression, inhibits the adhesion of endothelial cell to the extracellular matrix (ECM), and inhibits the reorganization of the actin cytoskeleton, formation of actin stress fibers and focal adhesions in endothelial cells that have adhered to ANGPTL4-containing ECM (in vitro). Depending on context, may modulate tumor-related angiogenesis. Its function is as follows. Mediates inactivation of the lipoprotein lipase LPL, and thereby plays an important role in the regulation of triglyceride clearance from the blood serum and in lipid metabolism. Has higher activity in LPL inactivation than the uncleaved protein. The polypeptide is Angiopoietin-related protein 4 (ANGPTL4) (Bos taurus (Bovine)).